Consider the following 764-residue polypeptide: PFL-like enzyme TdcE (764 aa).

The PFL domain occupies 7–629 (TSDKLYADAW…KTGNTPDGRR (623 aa)). Cys-423 serves as the catalytic S-acetylcysteine intermediate. Cys-424 functions as the Cysteine radical intermediate in the catalytic mechanism. A disordered region spans residues 622 to 645 (GNTPDGRRAGTPFAPGANPMHGRD). In terms of domain architecture, Glycine radical spans 636-764 (PGANPMHGRD…VISRTFTQAL (129 aa)). Gly-739 bears the Glycine radical mark.

Belongs to the glycyl radical enzyme (GRE) family. PFL subfamily.

Its subcellular location is the cytoplasm. It carries out the reaction 2-oxobutanoate + CoA = propanoyl-CoA + formate. It catalyses the reaction formate + acetyl-CoA = pyruvate + CoA. The protein operates within amino-acid degradation; L-threonine degradation via propanoate pathway; propanoate from L-threonine: step 2/4. Dependent on PFL-activase. In terms of biological role, catalyzes the cleavage of 2-ketobutyrate to propionyl-CoA and formate. It can also use pyruvate as substrate. This Escherichia coli (strain K12) protein is PFL-like enzyme TdcE (tdcE).